The chain runs to 478 residues: Methionine aminopeptidase 2-1 (478 aa).

Residues 1–124 (MGSKSPEGHN…PRVPLSTLFP (124 aa)) are disordered. Over residues 46-56 (NDDDDADDDEK) the composition is skewed to acidic residues. The segment covering 92 to 104 (KKKKKRKRSKKKA) has biased composition (basic residues). A substrate-binding site is contributed by H230. The a divalent metal cation site is built by D251, D262, and H331. Position 339 (H339) interacts with substrate. Residues E364 and E459 each contribute to the a divalent metal cation site.

The protein belongs to the peptidase M24A family. Methionine aminopeptidase eukaryotic type 2 subfamily. Requires Co(2+) as cofactor. The cofactor is Zn(2+). Mn(2+) is required as a cofactor. Fe(2+) serves as cofactor.

Its subcellular location is the cytoplasm. It carries out the reaction Release of N-terminal amino acids, preferentially methionine, from peptides and arylamides.. In terms of biological role, cotranslationally removes the N-terminal methionine from nascent proteins. The N-terminal methionine is often cleaved when the second residue in the primary sequence is small and uncharged (Met-Ala-, Cys, Gly, Pro, Ser, Thr, or Val). In Aspergillus clavatus (strain ATCC 1007 / CBS 513.65 / DSM 816 / NCTC 3887 / NRRL 1 / QM 1276 / 107), this protein is Methionine aminopeptidase 2-1.